The following is a 164-amino-acid chain: uncharacterized protein (164 aa).

CBS domains follow at residues 9-66 and 72-128; these read ATTK…DIDS and MTKD…VHTM.

This is an uncharacterized protein from Acidianus ambivalens (Desulfurolobus ambivalens).